A 369-amino-acid chain; its full sequence is MSYQSILLRQVNSLCDNLEEVARDENGGLIDMAMQSDYFTFDVMSEVIFGMAYNALKDTSYRFVTGALGSSNIRIGTLVQSPLPAMCRIDKYLFPESIQGRNKFLGFIGSLLRDRSKASFAGNGNVFSFLETAKDPDGGNQLSKSEIRAECATLVAAGTDTSSSTLAATLFYLSRNSKCYSRVSEEVRNAFSSHQDIKIGPELNSCVYLRACIEETLRMSPPVGAALWREIGPGGMNIGPLTLPAGVDVGTGIYSLHHNAAYHPEPFKYLPERWLVGEGSSTSESVELARSAFAPFSRGPRSCVGKGFAYHELTLTIAHILHRFDFSATEEDFALRHGSEGPGGINEFLLHDHVTGARSGPLLQFSMRR.

Cys303 contributes to the heme binding site.

This sequence belongs to the cytochrome P450 family. Heme is required as a cofactor.

It participates in secondary metabolite biosynthesis. Its function is as follows. Cytochrome P450 monooxygenase; part of the gene cluster that mediates the biosynthesis of the cyclic tetrapeptide apicidin F (APF). The non-ribosomal peptide synthetase apf1 incorporates four different amino acids to produce apicidin F: L-phenylalanine, D-pipecolic acid (D-pip), N-methoxy-L-tryptophan and L-2-aminooctanedioic acid. L-Phenylalanine is the only proteinogenic amino acid directly used by apf1. The 3 other apf1 substrates are non-proteinogenic and have to be modified by other enzymes of the cluster. Lysine is converted to delta-1-pyrroline-5-carboxylate (P5C) which is reduced to L-pipecolic acid (L-pip) by apf3. L-pip is epimerized to D-pip, probably by apf1 activity, prior to incorporation. L-Tryptophan is N-oxidyzed by one of the cytochrome P450 monooxygenases (apf7 or apf8), and further methylated at the hydroxy group by the O-methyltransferase apf6 to yield N-methoxy-L-tryptophan. The synthesis of the fourth apf1 substrate is more complex. The fatty acid synthase apf5 is involved in the synthesis of the octanoic acid backbone of L-2-aminooctanedioic acid by fixing one acetyl-CoA unit and three malonyl-CoA units. Then one of the cytochrome P450 monooxygenases (apf7 or apf8) may oxidize this backbone to 2-oxooctanoic acid. The aminotransferase apf4 is predicted to catalyze the exchange of the keto group with an amino group. The next step would be the oxidation of 2-aminooctanoic acid by one of the cytochrome P450 monooxygenases (apf7 or apf8). The last step is the oxidation of 2-amino-8-hydroxyoctanoic acid to 2-aminooctanedioic acid is catalyzed by the FAD-dependent monooxygenase apf9. This chain is Cytochrome P450 monooxygenase apf8, found in Gibberella fujikuroi (strain CBS 195.34 / IMI 58289 / NRRL A-6831) (Bakanae and foot rot disease fungus).